Reading from the N-terminus, the 511-residue chain is Coatomer subunit delta (511 aa).

Positions 168–177 (QARRDAERQG) are enriched in basic and acidic residues. The tract at residues 168–188 (QARRDAERQGKKAPGFGGFGS) is disordered. Serine 223 carries the post-translational modification Phosphoserine. N6-acetyllysine occurs at positions 233 and 241. A Phosphoserine modification is found at serine 244. One can recognise an MHD domain in the interval 271–511 (MESVHMKIEE…TFLVDKYEIL (241 aa)). An N6-acetyllysine mark is found at lysine 309 and lysine 351. Phosphoserine is present on serine 493.

This sequence belongs to the adaptor complexes medium subunit family. Delta-COP subfamily. As to quaternary structure, oligomeric complex that consists of at least the alpha, beta, beta', gamma, delta, epsilon and zeta subunits.

Its subcellular location is the cytoplasm. The protein localises to the golgi apparatus membrane. It is found in the cytoplasmic vesicle. It localises to the COPI-coated vesicle membrane. In terms of biological role, the coatomer is a cytosolic protein complex that binds to dilysine motifs and reversibly associates with Golgi non-clathrin-coated vesicles, which further mediate biosynthetic protein transport from the ER, via the Golgi up to the trans Golgi network. Coatomer complex is required for budding from Golgi membranes, and is essential for the retrograde Golgi-to-ER transport of dilysine-tagged proteins. In mammals, the coatomer can only be recruited by membranes associated to ADP-ribosylation factors (ARFs), which are small GTP-binding proteins; the complex also influences the Golgi structural integrity, as well as the processing, activity, and endocytic recycling of LDL receptors. This Rattus norvegicus (Rat) protein is Coatomer subunit delta (Arcn1).